We begin with the raw amino-acid sequence, 606 residues long: NADH-ubiquinone oxidoreductase chain 5 (606 aa).

The residue at position 1 (Met-1) is an N-formylmethionine. The next 15 membrane-spanning stretches (helical) occupy residues 4-24, 43-63, 87-107, 117-137, 140-160, 171-191, 213-233, 241-261, 273-293, 310-330, 366-386, 413-433, 457-477, 482-502, and 582-602; these read FSSL…MMSF, AFIT…ELII, MMFI…SMWY, FFKY…ANNL, LFIG…WWYG, AILY…WFLT, LIGL…HPWL, TPVS…FLLI, IQSI…MCAL, LGLM…LHIC, MPFT…MPFL, LIAT…ALLG, LLIG…PTTI, MPYY…ILAL, and GLIK…MILF.

As to quaternary structure, core subunit of respiratory chain NADH dehydrogenase (Complex I) which is composed of 45 different subunits.

It is found in the mitochondrion inner membrane. It carries out the reaction a ubiquinone + NADH + 5 H(+)(in) = a ubiquinol + NAD(+) + 4 H(+)(out). Its function is as follows. Core subunit of the mitochondrial membrane respiratory chain NADH dehydrogenase (Complex I) which catalyzes electron transfer from NADH through the respiratory chain, using ubiquinone as an electron acceptor. Essential for the catalytic activity and assembly of complex I. In Bos taurus (Bovine), this protein is NADH-ubiquinone oxidoreductase chain 5 (MT-ND5).